Consider the following 342-residue polypeptide: Endolytic peptidoglycan transglycosylase RlpA (342 aa).

An N-terminal signal peptide occupies residues 1 to 26 (MSKRVRSSLILPAVCGLGLAAVLLSS). Residue Cys27 is the site of N-palmitoyl cysteine attachment. The S-diacylglycerol cysteine moiety is linked to residue Cys27. The region spanning 261-342 (SLPADGLYLQ…LGQPTLVRPD (82 aa)) is the SPOR domain.

It belongs to the RlpA family.

It localises to the cell membrane. Functionally, lytic transglycosylase with a strong preference for naked glycan strands that lack stem peptides. In Pseudomonas aeruginosa (strain ATCC 15692 / DSM 22644 / CIP 104116 / JCM 14847 / LMG 12228 / 1C / PRS 101 / PAO1), this protein is Endolytic peptidoglycan transglycosylase RlpA.